A 239-amino-acid polypeptide reads, in one-letter code: Superoxide dismutase [Mn] 3 (239 aa).

A compositionally biased stretch (polar residues) spans 1-19 (ASTQQTPAQSPTASPTVST). The tract at residues 1-20 (ASTQQTPAQSPTASPTVSTP) is disordered. Positions 1–30 (ASTQQTPAQSPTASPTVSTPVAYVDRPLTA) are cleaved as a signal peptide. 4 residues coordinate Mn(2+): histidine 57, histidine 112, aspartate 195, and histidine 199.

It belongs to the iron/manganese superoxide dismutase family. Homodimer. Mn(2+) serves as cofactor.

It carries out the reaction 2 superoxide + 2 H(+) = H2O2 + O2. Functionally, destroys superoxide anion radicals which are normally produced within the cells and which are toxic to biological systems. In Leptolyngbya boryana (Plectonema boryanum), this protein is Superoxide dismutase [Mn] 3 (sodA3).